A 120-amino-acid chain; its full sequence is Putative membrane protein insertion efficiency factor (120 aa).

The disordered stretch occupies residues 93–120; it reads GRSCQTDVDGANDDWNPASKRGERESFV.

Belongs to the UPF0161 family.

It localises to the cell membrane. In terms of biological role, could be involved in insertion of integral membrane proteins into the membrane. This is Putative membrane protein insertion efficiency factor from Mycobacterium bovis (strain ATCC BAA-935 / AF2122/97).